A 186-amino-acid chain; its full sequence is Peptidyl-tRNA hydrolase (186 aa).

Tyrosine 16 contacts tRNA. Histidine 21 (proton acceptor) is an active-site residue. Residues tyrosine 60 and asparagine 62 each contribute to the tRNA site.

This sequence belongs to the PTH family. Monomer.

The protein localises to the cytoplasm. It catalyses the reaction an N-acyl-L-alpha-aminoacyl-tRNA + H2O = an N-acyl-L-amino acid + a tRNA + H(+). Functionally, hydrolyzes ribosome-free peptidyl-tRNAs (with 1 or more amino acids incorporated), which drop off the ribosome during protein synthesis, or as a result of ribosome stalling. Catalyzes the release of premature peptidyl moieties from peptidyl-tRNA molecules trapped in stalled 50S ribosomal subunits, and thus maintains levels of free tRNAs and 50S ribosomes. The polypeptide is Peptidyl-tRNA hydrolase (Tropheryma whipplei (strain TW08/27) (Whipple's bacillus)).